The chain runs to 314 residues: Oxidoreductase NAD-binding domain-containing protein 1 (314 aa).

An N-terminal signal peptide occupies residues 1–18; sequence MALVAGSAAYQVLRGVTG. Residues 63-166 form the FAD-binding FR-type domain; the sequence is EIISPAKVCE…VGGEFCFDPQ (104 aa). 180–185 serves as a coordination point for NAD(+); sequence GVGINP.

This Xenopus tropicalis (Western clawed frog) protein is Oxidoreductase NAD-binding domain-containing protein 1 (oxnad1).